The chain runs to 364 residues: MKRRLVLENGAVFEGEAFGSLEHNMGEVVFNTGMTGYQEILSDPSYCGQIVTLTYPLIGNYGINRDDFESITPFVKGLIIKELCELPSNWRSAYTLDEYLKMKNIPGLQGIDTRKLTRMIRTAGALKGTFASSDEDIEAVLKRLNETELPRNQVSQVSAKTAYPSPGRGKRIVLVDFGMKHGILRELNKRKCDVIVVPYNITAEEVLQLKPDGIMLSNGPGDPKDVPEAIEMIKGVLGKVPLFGICLGHQLFALACGANTEKMKFGHRGSNHPVKELATGKVALTSQNHGYTVSSISKTELEVTHIAINDDTIEGLKHKTLPAFTVQYHPEASPGPEDANHLFDRFIEMIETTEKEGEAVCQNA.

The CPSase stretch occupies residues 1 to 171; sequence MKRRLVLENG…AYPSPGRGKR (171 aa). 3 residues coordinate L-glutamine: Ser45, Gly219, and Gly221. The region spanning 171-356 is the Glutamine amidotransferase type-1 domain; sequence RIVLVDFGMK…IEMIETTEKE (186 aa). Cys246 serves as the catalytic Nucleophile. Leu247, Gln250, Asn288, Gly290, and Tyr291 together coordinate L-glutamine. Catalysis depends on residues His329 and Glu331.

It belongs to the CarA family. Composed of two chains; the small (or glutamine) chain promotes the hydrolysis of glutamine to ammonia, which is used by the large (or ammonia) chain to synthesize carbamoyl phosphate. Tetramer of heterodimers (alpha,beta)4. Interacts with BrxC.

It carries out the reaction hydrogencarbonate + L-glutamine + 2 ATP + H2O = carbamoyl phosphate + L-glutamate + 2 ADP + phosphate + 2 H(+). The catalysed reaction is L-glutamine + H2O = L-glutamate + NH4(+). The protein operates within pyrimidine metabolism; UMP biosynthesis via de novo pathway; (S)-dihydroorotate from bicarbonate: step 1/3. In terms of biological role, small subunit of the glutamine-dependent carbamoyl phosphate synthetase (CPSase). CPSase catalyzes the formation of carbamoyl phosphate from the ammonia moiety of glutamine, carbonate, and phosphate donated by ATP, constituting the first step of the biosynthetic pathway leading to arginine and/or urea. The small subunit (glutamine amidotransferase) binds and cleaves glutamine to supply the large subunit with the substrate ammonia. The protein is Carbamoyl phosphate synthase pyrimidine-specific small chain of Bacillus subtilis (strain 168).